A 286-amino-acid polypeptide reads, in one-letter code: Sulfur carrier protein FdhD (286 aa).

The active-site Cysteine persulfide intermediate is the Cys110. Residue 247-252 participates in Mo-bis(molybdopterin guanine dinucleotide) binding; sequence FARGEK.

This sequence belongs to the FdhD family.

The protein localises to the cytoplasm. Required for formate dehydrogenase (FDH) activity. Acts as a sulfur carrier protein that transfers sulfur from IscS to the molybdenum cofactor prior to its insertion into FDH. The polypeptide is Sulfur carrier protein FdhD (Wolinella succinogenes (strain ATCC 29543 / DSM 1740 / CCUG 13145 / JCM 31913 / LMG 7466 / NCTC 11488 / FDC 602W) (Vibrio succinogenes)).